The sequence spans 150 residues: Arginine repressor (150 aa).

This sequence belongs to the ArgR family.

The protein localises to the cytoplasm. It functions in the pathway amino-acid biosynthesis; L-arginine biosynthesis [regulation]. Its function is as follows. Regulates arginine biosynthesis genes. The polypeptide is Arginine repressor (Halothermothrix orenii (strain H 168 / OCM 544 / DSM 9562)).